The chain runs to 269 residues: Autophagy-related protein 5 (269 aa).

Residue Lys-102 forms a Glycyl lysine isopeptide (Lys-Gly) (interchain with G-Cter in ATG12) linkage.

This sequence belongs to the ATG5 family. In terms of assembly, conjugated with ATG12. The ATG5-ATG12 conjugate forms a complex with several units of ATG16. The ATG12-ATG5 conjugate also associates with ATG3. In terms of processing, conjugated to ATG12; which is essential for autophagy. Conjugation with ATG12 involves ATG7 as an E1-like activating enzyme and ATG10 as an E2-like conjugating enzyme.

The protein resides in the preautophagosomal structure membrane. Its function is as follows. Involved in cytoplasm to vacuole transport (Cvt) and autophagic vesicle formation. Autophagy is essential for maintenance of amino acid levels and protein synthesis under nitrogen starvation. Required for selective autophagic degradation of the nucleus (nucleophagy). Also required for mitophagy, which eliminates defective or superfluous mitochondria in order to fulfill cellular energy requirements and prevent excess ROS production. Conjugation with ATG12, through a ubiquitin-like conjugating system involving ATG7 as an E1-like activating enzyme and ATG10 as an E2-like conjugating enzyme, is essential for its function. The ATG12-ATG5 conjugate acts as an E3-like enzyme which is required for lipidation of ATG8 and ATG8 association to the vesicle membranes. ATG12-ATG5 rearranges the ATG3 catalytic center and enhances its E2 activity. Required for proper vegetative growth, asexual/sexual reproduction, but, unlike several plant and animal pathogenic fungi, where ATG5 is required for infection, in B.bassiana it is dispensable for pathogenesis. The polypeptide is Autophagy-related protein 5 (Beauveria bassiana (strain ARSEF 2860) (White muscardine disease fungus)).